Reading from the N-terminus, the 182-residue chain is UPF0397 protein BcerKBAB4_2500 (182 aa).

A run of 5 helical transmembrane segments spans residues 9-29, 40-60, 71-91, 114-134, and 142-162; these read VVAIGIGAALYGVLGLWGFSI, AILTVFGALFGPVAGLLIGLI, WGIWWGWVISSGIIGLAMGLI, IAGLIGIVIAIIFAGSFDIIV, and IVIQVLGATIADVIVFLVLGL.

Belongs to the UPF0397 family.

The protein resides in the cell membrane. The protein is UPF0397 protein BcerKBAB4_2500 of Bacillus mycoides (strain KBAB4) (Bacillus weihenstephanensis).